Reading from the N-terminus, the 229-residue chain is Transmembrane 4 L6 family member 20 (229 aa).

Over 1 to 14 (MTCCEGWTSCNGFS) the chain is Lumenal. A helical transmembrane segment spans residues 15–35 (LLVLLLLGVVLNAIPLIVSLV). The Cytoplasmic segment spans residues 36 to 44 (EEDQFSQNP). A helical transmembrane segment spans residues 45–65 (ISCFEWWFPGIIGAGLMAIPA). The Lumenal segment spans residues 66–83 (TTMSLTARKRACCNNRTG). A helical membrane pass occupies residues 84–104 (MFLSSLFSVITVIGALYCMLI). Residues 105-185 (SIQALLKGPL…HFDSEENKHR (81 aa)) lie on the Cytoplasmic side of the membrane. A helical membrane pass occupies residues 186–206 (LIHFSVFLGLLLVGILEVLFG). At 207-229 (LSQIVIGFLGCLCGVSKRRSQIV) the chain is on the lumenal side.

This sequence belongs to the L6 tetraspanin family. Glycosylated at Asn-132, Asn-148 and Asn-163 in presence of ceramide which inverts the orientation of TM4SF20 in membranes exposing these residues to the endoplasmic reticulum lumen. In terms of processing, cleaved by signal peptidase at Ser-14 but the peptide does not act as a signal peptide. Cleavage is inhibited by ceramide which inverts the orientation of TM4SF20 in membranes exposing the N-terminus to the cytosol and not to the endoplasmic reticulum lumen. Expressed in the brain, with high levels in the parietal lobe, hippocampus, pons, white matter and cerebellum.

It localises to the membrane. The protein resides in the endoplasmic reticulum membrane. Its function is as follows. Polytopic transmembrane protein that inhibits regulated intramembrane proteolysis (RIP) of CREB3L1, inhibiting its activation and the induction of collagen synthesis. In response to ceramide, which alters TM4SF20 membrane topology, stimulates RIP activation of CREB3L1. Ceramide reverses the direction through which transmembrane helices are translocated into the endoplasmic reticulum membrane during translation of TM4SF20, this mechanism is called 'regulated alternative translocation' (RAT) and regulates the function of the transmembrane protein. This chain is Transmembrane 4 L6 family member 20 (TM4SF20), found in Homo sapiens (Human).